The sequence spans 155 residues: 2-C-methyl-D-erythritol 2,4-cyclodiphosphate synthase (155 aa).

Residues D9 and H11 each coordinate a divalent metal cation. 4-CDP-2-C-methyl-D-erythritol 2-phosphate-binding positions include 9 to 11 and 35 to 36; these read DSH and HS. An a divalent metal cation-binding site is contributed by H43. 4-CDP-2-C-methyl-D-erythritol 2-phosphate is bound at residue 57-59; it reads DIG.

It belongs to the IspF family. In terms of assembly, homotrimer. A divalent metal cation serves as cofactor.

It catalyses the reaction 4-CDP-2-C-methyl-D-erythritol 2-phosphate = 2-C-methyl-D-erythritol 2,4-cyclic diphosphate + CMP. It participates in isoprenoid biosynthesis; isopentenyl diphosphate biosynthesis via DXP pathway; isopentenyl diphosphate from 1-deoxy-D-xylulose 5-phosphate: step 4/6. Its function is as follows. Involved in the biosynthesis of isopentenyl diphosphate (IPP) and dimethylallyl diphosphate (DMAPP), two major building blocks of isoprenoid compounds. Catalyzes the conversion of 4-diphosphocytidyl-2-C-methyl-D-erythritol 2-phosphate (CDP-ME2P) to 2-C-methyl-D-erythritol 2,4-cyclodiphosphate (ME-CPP) with a corresponding release of cytidine 5-monophosphate (CMP). The chain is 2-C-methyl-D-erythritol 2,4-cyclodiphosphate synthase from Koribacter versatilis (strain Ellin345).